The chain runs to 325 residues: Syntaxin-16 (325 aa).

Over 1 to 301 (MATRRLTDAF…AEQYQKKNRK (301 aa)) the chain is Cytoplasmic. A Phosphoserine modification is found at S41. The region spanning 230-292 (TLMVEERERE…EDGLKQLHKA (63 aa)) is the t-SNARE coiled-coil homology domain. Residues 302 to 322 (MLVILILFVIIIVLIVVLVGV) traverse the membrane as a helical; Anchor for type IV membrane protein segment. At 323–325 (KSR) the chain is on the vesicular side.

Belongs to the syntaxin family. Interacts with GCC2. Interacts with BAIAP3; this interaction is increased in the presence of calcium. As to expression, ubiquitous.

The protein resides in the golgi apparatus membrane. It is found in the cytoplasm. Its function is as follows. SNARE involved in vesicular transport from the late endosomes to the trans-Golgi network. In Homo sapiens (Human), this protein is Syntaxin-16 (STX16).